The primary structure comprises 211 residues: Ferritin heavy chain (211 aa).

The signal sequence occupies residues 1–20 (MKAVLFAVAALLAVCIPISA). In terms of domain architecture, Ferritin-like diiron spans 35 to 191 (ITMQQSCRGS…GKASTLKKML (157 aa)). C41 and C150 are disulfide-bonded. Fe cation-binding residues include E52, E87, H90, E136, and Q173.

It belongs to the ferritin family. Oligomer of 12 light (L) chains and 12 heavy (H) chains; L and H chains are disulfide-linked. The functional molecule forms a roughly spherical shell with a diameter of 12 nm and contains a central cavity into which the insoluble ferric iron core is deposited.

It is found in the golgi apparatus. The protein resides in the secreted. It catalyses the reaction 4 Fe(2+) + O2 + 4 H(+) = 4 Fe(3+) + 2 H2O. Functionally, stores iron in a soluble, non-toxic, readily available form. Important for iron homeostasis. Iron is taken up in the ferrous form and deposited as ferric hydroxides after oxidation. Ferritin is composed of a heavy (H) chain which is responsible for the oxidation and uptake of ferrous iron, and a light (L) chain which facilitates the nucleation of the ferrihydrite iron core. This is Ferritin heavy chain from Papilio xuthus (Asian swallowtail butterfly).